The following is a 374-amino-acid chain: UPF0496 protein At4g34320 (374 aa).

A run of 2 helical transmembrane segments spans residues isoleucine 215–alanine 235 and proline 238–isoleucine 258.

It belongs to the UPF0496 family.

The protein localises to the membrane. This Arabidopsis thaliana (Mouse-ear cress) protein is UPF0496 protein At4g34320.